The sequence spans 256 residues: tRNA (guanine-N(7)-)-methyltransferase (256 aa).

Positions 85, 110, 137, and 159 each coordinate S-adenosyl-L-methionine. Asp-159 is an active-site residue. Substrate is bound by residues Lys-163 and Asp-195.

The protein belongs to the class I-like SAM-binding methyltransferase superfamily. TrmB family.

The catalysed reaction is guanosine(46) in tRNA + S-adenosyl-L-methionine = N(7)-methylguanosine(46) in tRNA + S-adenosyl-L-homocysteine. It participates in tRNA modification; N(7)-methylguanine-tRNA biosynthesis. Catalyzes the formation of N(7)-methylguanine at position 46 (m7G46) in tRNA. The polypeptide is tRNA (guanine-N(7)-)-methyltransferase (Rhodopseudomonas palustris (strain BisB5)).